The chain runs to 314 residues: uncharacterized protein (314 aa).

10 helical membrane-spanning segments follow: residues 4–23 (FFIGDLLPIIVIMLLGYFSG), 36–53 (FNKLVLNYALPAALFVSI), 68–90 (TLVSLVVIVGCFFFSWFGCYKFF), 97–116 (AAVCALIAGSPTIGFLGFAV), 131–153 (VAIISIIVNAITIPIGLYLLNPS), 174–196 (PVVWAPVLATILVLVGVKIPAAW), 200–222 (FNLIAKANSGVAVFAAGLTLAAH), 229–251 (EIAYNTFLKLILMPLALLLVGMA), 261–283 (MMVLAGALPPAFSGIIIASRFNV), and 290–309 (ASLAVSVLGFVVTAPLWIYV).

It belongs to the auxin efflux carrier (TC 2.A.69) family.

It localises to the cell membrane. This is an uncharacterized protein from Escherichia coli O157:H7.